Consider the following 592-residue polypeptide: Autophagy-related protein 22-1 (592 aa).

4 helical membrane-spanning segments follow: residues 31 to 51 (YGWA…PITL), 108 to 128 (TASF…VIII), 143 to 163 (LLIV…VVVP), and 167 to 187 (LLGG…FVLL). An N-linked (GlcNAc...) asparagine glycan is attached at Asn-213. Helical transmembrane passes span 271–291 (IGIG…VVVV), 301–321 (LVLF…SLWL), 364–384 (IVIF…VSGT), 398–418 (AALG…AFSW), 433–453 (IIAC…GFIP), 468–490 (MYPL…RSFF), 502–524 (FYAL…VGAI), and 534–554 (AFVF…LVDV). Positions 572–592 (PQGSEYGAISDDQTTEDPIEE) are disordered.

This sequence belongs to the ATG22 family.

It localises to the vacuole membrane. Vacuolar effluxer which mediate the efflux of amino acids resulting from autophagic degradation. The release of autophagic amino acids allows the maintenance of protein synthesis and viability during nitrogen starvation. This is Autophagy-related protein 22-1 (atg22-1) from Penicillium rubens (strain ATCC 28089 / DSM 1075 / NRRL 1951 / Wisconsin 54-1255) (Penicillium chrysogenum).